The primary structure comprises 122 residues: Large ribosomal subunit protein bL12 (122 aa).

Belongs to the bacterial ribosomal protein bL12 family. Homodimer. Part of the ribosomal stalk of the 50S ribosomal subunit. Forms a multimeric L10(L12)X complex, where L10 forms an elongated spine to which 2 to 4 L12 dimers bind in a sequential fashion. Binds GTP-bound translation factors.

Functionally, forms part of the ribosomal stalk which helps the ribosome interact with GTP-bound translation factors. Is thus essential for accurate translation. The polypeptide is Large ribosomal subunit protein bL12 (Dichelobacter nodosus (strain VCS1703A)).